Consider the following 92-residue polypeptide: Small ribosomal subunit protein uS19 (92 aa).

It belongs to the universal ribosomal protein uS19 family.

Protein S19 forms a complex with S13 that binds strongly to the 16S ribosomal RNA. The polypeptide is Small ribosomal subunit protein uS19 (Corynebacterium aurimucosum (strain ATCC 700975 / DSM 44827 / CIP 107346 / CN-1) (Corynebacterium nigricans)).